Here is a 72-residue protein sequence, read N- to C-terminus: Translation initiation factor IF-1 (72 aa).

Residues 1–72 (MAKQDVIELE…TRGRITYRYK (72 aa)) form the S1-like domain.

It belongs to the IF-1 family. Component of the 30S ribosomal translation pre-initiation complex which assembles on the 30S ribosome in the order IF-2 and IF-3, IF-1 and N-formylmethionyl-tRNA(fMet); mRNA recruitment can occur at any time during PIC assembly.

The protein resides in the cytoplasm. One of the essential components for the initiation of protein synthesis. Stabilizes the binding of IF-2 and IF-3 on the 30S subunit to which N-formylmethionyl-tRNA(fMet) subsequently binds. Helps modulate mRNA selection, yielding the 30S pre-initiation complex (PIC). Upon addition of the 50S ribosomal subunit IF-1, IF-2 and IF-3 are released leaving the mature 70S translation initiation complex. This is Translation initiation factor IF-1 from Staphylococcus aureus (strain USA300 / TCH1516).